Here is a 248-residue protein sequence, read N- to C-terminus: 3-deoxy-manno-octulosonate cytidylyltransferase (248 aa).

This sequence belongs to the KdsB family.

It localises to the cytoplasm. The enzyme catalyses 3-deoxy-alpha-D-manno-oct-2-ulosonate + CTP = CMP-3-deoxy-beta-D-manno-octulosonate + diphosphate. The protein operates within nucleotide-sugar biosynthesis; CMP-3-deoxy-D-manno-octulosonate biosynthesis; CMP-3-deoxy-D-manno-octulosonate from 3-deoxy-D-manno-octulosonate and CTP: step 1/1. Its pathway is bacterial outer membrane biogenesis; lipopolysaccharide biosynthesis. Activates KDO (a required 8-carbon sugar) for incorporation into bacterial lipopolysaccharide in Gram-negative bacteria. The protein is 3-deoxy-manno-octulosonate cytidylyltransferase of Chlorobium chlorochromatii (strain CaD3).